Here is a 290-residue protein sequence, read N- to C-terminus: MAEKQQAVAEFYDNSTGAWEVFFGDHLHDGFYDPGTTATIPASRAAVVRMIDEALRFANVSTDPAKKPRNMLDVGCGIGGTCLYVAKKYDIQCTGITISPEQVKCAQGFAAAQGLENKATFDCGDALNMPYKDGTFDVVFTIQCIEHIQDKEKFIREMVRVAAPGAAIVIVSYGHRNLSPGEESLKPEEKKTLKKICDNIVLSWLCSSADYVRWLTPLPVQDIKTADWTQNIQPFYPLLFKEAFTWRGFTSLLMKGGWSAIKVVLAVKVMAKAADDGLLKFMAVTCKKSK.

Residues 71–80 (MLDVGCGIGG) form an SAM motif I region. The Vacuolar targeting signal signature appears at 133–139 (DGTFDVV). The interval 134–142 (GTFDVVFTI) is SAM motif II. Positions 161 to 170 (VAAPGAAIVI) are SAM motif III.

This sequence belongs to the class I-like SAM-binding methyltransferase superfamily. gTMT family. In terms of assembly, homodimer.

The protein localises to the vacuole membrane. It catalyses the reaction picrinine + S-adenosyl-L-methionine = ervincine + S-adenosyl-L-homocysteine + H(+). The protein operates within alkaloid biosynthesis; vindoline biosynthesis. In terms of biological role, S-adenosyl-L-methionine-dependent N-methyltransferase involved in the biosynthesis of biologically active monoterpenoid indole alkaloids (MIAs) natural products including vindoline. Catalyzes the conversion of picrinine to N-methylpicrinine (ervincine). This chain is Picrinine-N-methytransferase TMT4, found in Catharanthus roseus (Madagascar periwinkle).